The following is a 265-amino-acid chain: MSVKVSEYMTKKVVTVSKDNTVKDVIKLLKETGHNSFPVVENGKLIGIVSVHDIVGKDDNEKVENVMTKRKDMVVTTPDANIMDVGRIMFRTGFSKLPVVDEENNLVGIISNMDVIRSQIEKTTPKKLENIIKTYKSLGYNLRVEKEEVDVNKLRPTQNKIHADELVGRMYELKKGLAEPIIAIKTKRGDYYILVDGHHRAVAAYKMGVPKLDAYVIYLDTDKKLGIEKTAEIMNLKSLEDVKIVDSDDENSVKVIKYNKNGVLG.

2 consecutive CBS domains span residues 9–64 (MTKK…EKVE) and 67–126 (MTKR…TTPK).

This is an uncharacterized protein from Methanocaldococcus jannaschii (strain ATCC 43067 / DSM 2661 / JAL-1 / JCM 10045 / NBRC 100440) (Methanococcus jannaschii).